The chain runs to 217 residues: Large ribosomal subunit protein uL29m (217 aa).

It belongs to the universal ribosomal protein uL29 family. As to quaternary structure, component of the mitochondrial large ribosomal subunit. Mature mitochondrial ribosomes consist of a small (37S) and a large (54S) subunit. The 37S subunit contains at least 33 different proteins and 1 molecule of RNA (15S). The 54S subunit contains at least 45 different proteins and 1 molecule of RNA (21S).

It localises to the mitochondrion. This chain is Large ribosomal subunit protein uL29m (mrpl4), found in Aspergillus clavatus (strain ATCC 1007 / CBS 513.65 / DSM 816 / NCTC 3887 / NRRL 1 / QM 1276 / 107).